A 105-amino-acid polypeptide reads, in one-letter code: Small cysteine and glycine repeat-containing protein 10 (105 aa).

Residues 4-41 form a 10 X 2 AA repeats of CG region; the sequence is CGCGGCGGRCSGGCGGGCGGGCGGGCGGGCGGCGGGCG.

It belongs to the KRTAP type 28 family.

In terms of biological role, in the hair cortex, hair keratin intermediate filaments are embedded in an interfilamentous matrix, consisting of hair keratin-associated proteins (KRTAP), which are essential for the formation of a rigid and resistant hair shaft through their extensive disulfide bond cross-linking with abundant cysteine residues of hair keratins. The matrix proteins include the high-sulfur and high-glycine-tyrosine keratins. The protein is Small cysteine and glycine repeat-containing protein 10 of Homo sapiens (Human).